We begin with the raw amino-acid sequence, 410 residues long: MPSAISRGLLLLAGLCYLVFGIMAEDIQVAQVPSQHMPSHKVPRSLAHFAHSMHRVLTQQSNTSNIFFSPVSIATALAMVSLGAKGDTHTQILRSLEFNLTEIAEADIHDGFQNLLHTLNRPHSEHQLTTGNGLFLDQNLKLKEKFSGDVKTLYHAEAFPTNFSNPKEAEKQINAYVEKGTQGKIVDLVKDLGADTVLALVNYIFFRGKWEKPFDVKHTTQEDFHVDANTTVKVPMMKQQGMHKAFHCSTIQSWVLLLDYEGNVTALFLLPDEGKMQHLEETLTPELVFKFLRKTETMPAYVSLPKLSISGTYDLKEVLRDLGITNVFSGAADLSGITEDMPLKISKGLHKALLTIDEEGTEAAAATVLEATRTARPPRLSFNKPFFFLIIDHSTDTPLFVGKVMDPTKK.

Positions M1–A24 are cleaved as a signal peptide. Residues N62, N99, N162, N229, and N263 are each glycosylated (N-linked (GlcNAc...) asparagine). The tract at residues G360–S381 is RCL.

It belongs to the serpin family.

It localises to the secreted. It is found in the extracellular space. Its function is as follows. Contrapsin inhibits trypsin-like proteases. This is Serine proteinase inhibitor A3K (SERPINA3K) from Cavia porcellus (Guinea pig).